Reading from the N-terminus, the 864-residue chain is Leucine--tRNA ligase (864 aa).

The 'HIGH' region signature appears at 42-52 (PYPSGKLHMGH). The 'KMSKS' region motif lies at 624-628 (KMSKS). Position 627 (K627) interacts with ATP.

It belongs to the class-I aminoacyl-tRNA synthetase family.

It is found in the cytoplasm. The catalysed reaction is tRNA(Leu) + L-leucine + ATP = L-leucyl-tRNA(Leu) + AMP + diphosphate. This chain is Leucine--tRNA ligase, found in Burkholderia ambifaria (strain MC40-6).